The chain runs to 307 residues: Voltage-dependent anion channel-forming protein alr2987 (307 aa).

A run of 4 helical transmembrane segments spans residues 19 to 39, 47 to 67, 209 to 229, and 238 to 258; these read VIGA…LVTL, VSQP…LLVF, PLAY…LLPF, and WTGL…AIGL.

It belongs to the anion channel-forming bestrophin (TC 1.A.46) family.

It localises to the cell membrane. The sequence is that of Voltage-dependent anion channel-forming protein alr2987 from Nostoc sp. (strain PCC 7120 / SAG 25.82 / UTEX 2576).